A 308-amino-acid chain; its full sequence is Carnitine transport binding protein OpuCC (308 aa).

A signal peptide spans Met1–Ser22. Residue Cys23 is the site of N-palmitoyl cysteine attachment. The S-diacylglycerol cysteine moiety is linked to residue Cys23.

It belongs to the OsmX family. In terms of assembly, the complex is composed of two ATP-binding proteins (OpuCA), two transmembrane proteins (OpuCB and OpuCD) and a solute-binding protein (OpuCC).

Its subcellular location is the cell membrane. Functionally, part of the ABC transporter complex OpuCABCD involved in carnitine uptake. Involved, with BetL and GbuABC, in osmoprotection and cryoprotection of Listeria. Can also mediate weak glycine betaine transport. The polypeptide is Carnitine transport binding protein OpuCC (opuCC) (Listeria monocytogenes serotype 1/2a (strain 10403S)).